The sequence spans 505 residues: Probable alpha-L-arabinofuranosidase C (505 aa).

Residues N152, N269, and N438 are each glycosylated (N-linked (GlcNAc...) asparagine).

The protein belongs to the glycosyl hydrolase 51 family.

The protein resides in the secreted. The catalysed reaction is Hydrolysis of terminal non-reducing alpha-L-arabinofuranoside residues in alpha-L-arabinosides.. It functions in the pathway glycan metabolism; L-arabinan degradation. Alpha-L-arabinofuranosidase involved in the degradation of arabinoxylan, a major component of plant hemicellulose. Acts only on small linear 1,5-alpha-linked L-arabinofuranosyl oligosaccharides. This is Probable alpha-L-arabinofuranosidase C (abfC) from Aspergillus clavatus (strain ATCC 1007 / CBS 513.65 / DSM 816 / NCTC 3887 / NRRL 1 / QM 1276 / 107).